A 243-amino-acid chain; its full sequence is Terpene cyclase dpasB (243 aa).

The next 7 helical transmembrane spans lie at 16-36 (VVWVTDVCKLVMAVGWLSNYI), 50-70 (MALMPLCCNFAWEFTYFFIYP), 79-99 (IHTLAFLLNCGVMYTAVRYGA), 112-132 (LPVIFVVCIACWVSAHVAFAE), 141-161 (AVSGFACQILLSAGGTCQLLC), 172-189 (LWLARFMGSFALILPNML), and 207-227 (IWFLGMFLFLDGSYGFVLWYV).

It belongs to the paxB family.

It localises to the membrane. Its pathway is secondary metabolite biosynthesis; terpenoid biosynthesis. Functionally, terpene cyclase; part of the gene cluster that mediates the biosynthesis of the diterpenoid pyrones subglutinols A and B. The first step of the pathway is the synthesis of the alpha-pyrone moiety by the polyketide synthase dpasA via condensation of one acetyl-CoA starter unit with 3 malonyl-CoA units and 2 methylations. The alpha-pyrone is then combined with geranylgeranyl pyrophosphate (GGPP) formed by the GGPP synthase dpasD through the action of the prenyltransferase dpasC to yield a linear alpha-pyrone diterpenoid. Subsequent steps in the diterpenoid pyrone biosynthetic pathway involve the decalin core formation, which is initiated by the epoxidation of the C10-C11 olefin by the FAD-dependent oxidoreductase dpasE, and is followed by a cyclization cascade catalyzed by the terpene cyclase dpasB. The FAD-linked oxidoreductase dpasF is then involved in tetrahydrofuran (THF) ring formation at the C5 unit to complete the formation of subglutinols A and B. DpasF possesses also an additional catalytic ability of multi-step oxidations to generate a new DDP analog with an enone system at the C5 named FDDP A. This Apiospora sacchari (Arthrinium sacchari) protein is Terpene cyclase dpasB.